Consider the following 195-residue polypeptide: UPF0157 protein BH1888 (195 aa).

The span at 1–12 (MPPMKDSSNSTP) shows a compositional bias: polar residues. Positions 1–21 (MPPMKDSSNSTPRTDEELQEV) are disordered.

Belongs to the UPF0157 (GrpB) family.

In Halalkalibacterium halodurans (strain ATCC BAA-125 / DSM 18197 / FERM 7344 / JCM 9153 / C-125) (Bacillus halodurans), this protein is UPF0157 protein BH1888.